We begin with the raw amino-acid sequence, 394 residues long: S-adenosylmethionine synthase 1 (394 aa).

Glu11 contacts Mg(2+). Residue His17 coordinates ATP. Glu45 contributes to the K(+) binding site. L-methionine is bound by residues Glu58 and Gln101. ATP-binding positions include 169–171, 237–240, Asp248, 254–255, Ala271, Lys275, and Lys279; these read DGK, SGRF, and RK. Asp248 provides a ligand contact to L-methionine. Position 279 (Lys279) interacts with L-methionine.

It belongs to the AdoMet synthase family. As to quaternary structure, homotetramer. Mn(2+) is required as a cofactor. The cofactor is Mg(2+). Co(2+) serves as cofactor. Requires K(+) as cofactor.

The protein resides in the cytoplasm. The enzyme catalyses L-methionine + ATP + H2O = S-adenosyl-L-methionine + phosphate + diphosphate. It functions in the pathway amino-acid biosynthesis; S-adenosyl-L-methionine biosynthesis; S-adenosyl-L-methionine from L-methionine: step 1/1. Catalyzes the formation of S-adenosylmethionine from methionine and ATP. The reaction comprises two steps that are both catalyzed by the same enzyme: formation of S-adenosylmethionine (AdoMet) and triphosphate, and subsequent hydrolysis of the triphosphate. The polypeptide is S-adenosylmethionine synthase 1 (SAMS1) (Triticum monococcum (Einkorn wheat)).